The sequence spans 160 residues: MAPK regulated corepressor interacting protein 2 (160 aa).

Position 1 is an N-acetylmethionine (Met1). Positions 1 to 64 (MYTITKGPSK…GPWPLSSPGP (64 aa)) are disordered. Arg35 is subject to Omega-N-methylarginine. Over residues 37 to 61 (PAPPTSQPPRAQPFAQPPGPWPLSS) the composition is skewed to pro residues. Ser61 carries the phosphoserine modification. Arg65 is subject to Omega-N-methylarginine. Position 82 is a phosphoserine (Ser82).

Belongs to the MCRIP family. As to quaternary structure, interacts with DDX6. Interacts with MCRIP1.

It is found in the cytoplasm. The protein localises to the stress granule. The protein resides in the nucleus. This is MAPK regulated corepressor interacting protein 2 (MCRIP2) from Homo sapiens (Human).